A 385-amino-acid polypeptide reads, in one-letter code: Transcription termination factor 2, mitochondrial (385 aa).

The transit peptide at 1–35 (MSWRLLTGYQLCRLRLFRKPQPALKIRPSSVCVTY) directs the protein to the mitochondrion.

This sequence belongs to the mTERF family. Monomer.

It localises to the mitochondrion matrix. The protein resides in the mitochondrion nucleoid. In terms of biological role, binds mitochondrial DNA and plays a role in the regulation of transcription of mitochondrial mRNA and rRNA species. In Rattus norvegicus (Rat), this protein is Transcription termination factor 2, mitochondrial (Mterf2).